A 679-amino-acid chain; its full sequence is Glycine--tRNA ligase beta subunit (679 aa).

This sequence belongs to the class-II aminoacyl-tRNA synthetase family. Tetramer of two alpha and two beta subunits.

Its subcellular location is the cytoplasm. It catalyses the reaction tRNA(Gly) + glycine + ATP = glycyl-tRNA(Gly) + AMP + diphosphate. The polypeptide is Glycine--tRNA ligase beta subunit (Streptococcus uberis (strain ATCC BAA-854 / 0140J)).